The following is a 319-amino-acid chain: MPVGKLVFNQSEPTEFVFRAFTTATEFQVLLFLLFLLLYLMILCGNTAIIWVVCTHSTLRTPMYFFLSNLSFLELCYTTVVVPLMLSNILGAQKPISLAGCGAQMFFFVTLGSTDCFLLAIMAYDRYVAICHPLHYTLIMTRELCTQMLGGALGLALFPSLQLTALIFTLPFCGHHQEINHFLCDVPPVLRLACADIRVHQAVLYVVSILVLTIPFLLICVSYVFITCAILSIRSAEGRRRAFSTCSFHLTVVLLQYGCCSLVYLRPRSSTSEDEDSQIALVYTFVTPLLNPLLYSLRNKDVKGALRSAIIRKAASDAN.

The Extracellular portion of the chain corresponds to 1 to 29 (MPVGKLVFNQSEPTEFVFRAFTTATEFQV). Asparagine 9 carries N-linked (GlcNAc...) asparagine glycosylation. Residues 30-50 (LLFLLFLLLYLMILCGNTAII) traverse the membrane as a helical segment. Residues 51–58 (WVVCTHST) lie on the Cytoplasmic side of the membrane. Residues 59-79 (LRTPMYFFLSNLSFLELCYTT) traverse the membrane as a helical segment. At 80–103 (VVVPLMLSNILGAQKPISLAGCGA) the chain is on the extracellular side. A disulfide bridge connects residues cysteine 101 and cysteine 194. A helical membrane pass occupies residues 104–124 (QMFFFVTLGSTDCFLLAIMAY). Over 125 to 143 (DRYVAICHPLHYTLIMTRE) the chain is Cytoplasmic. A helical transmembrane segment spans residues 144–164 (LCTQMLGGALGLALFPSLQLT). The Extracellular segment spans residues 165–202 (ALIFTLPFCGHHQEINHFLCDVPPVLRLACADIRVHQA). The chain crosses the membrane as a helical span at residues 203 to 222 (VLYVVSILVLTIPFLLICVS). Over 223–242 (YVFITCAILSIRSAEGRRRA) the chain is Cytoplasmic. A helical transmembrane segment spans residues 243–263 (FSTCSFHLTVVLLQYGCCSLV). Residues 264–276 (YLRPRSSTSEDED) lie on the Extracellular side of the membrane. The helical transmembrane segment at 277–297 (SQIALVYTFVTPLLNPLLYSL) threads the bilayer. At 298–319 (RNKDVKGALRSAIIRKAASDAN) the chain is on the cytoplasmic side.

Belongs to the G-protein coupled receptor 1 family.

The protein resides in the cell membrane. Its function is as follows. Odorant receptor. This Homo sapiens (Human) protein is Olfactory receptor 10Q1 (OR10Q1).